The chain runs to 299 residues: Trans-aconitate 3-methyltransferase (299 aa).

At Ser2 the chain carries N-acetylserine.

The protein belongs to the methyltransferase superfamily. Tam family.

The protein localises to the cytoplasm. The catalysed reaction is trans-aconitate + S-adenosyl-L-methionine = (E)-2-(methoxycarbonylmethyl)but-2-enedioate + S-adenosyl-L-homocysteine. Its function is as follows. Catalyzes the S-adenosylmethionine monomethyl esterification of trans-aconitate and 3-isopropylmalate at high affinity and of other molecules like cis-aconitate, isocitrate, and citrate at lower velocities and affinities. The function of trans-aconitate methylation appears to be in reducing the toxicity of this spontaneous breakdown product of cis-aconitate. The role of 3-isopropylmalate methylation is unclear but may represent a metabolic branch at 3-isopropylmalate, where some of the material is taken in the pathway leading to leucine and some is taken in a pathway to the 3-isopropylmalate methyl ester, a molecule that provides a signal to switch from vegetative to invasive growth in response to amino acid starvation. This chain is Trans-aconitate 3-methyltransferase (TMT1), found in Saccharomyces cerevisiae (strain ATCC 204508 / S288c) (Baker's yeast).